A 737-amino-acid chain; its full sequence is Photosystem I P700 chlorophyll a apoprotein A2 (737 aa).

A run of 8 helical transmembrane segments spans residues 46–69 (LFST…FHIA), 135–158 (LYQG…LHLQ), 175–199 (LNHH…HVAI), 273–291 (IAHH…GHMY), 333–356 (LHFQ…QHMY), 372–398 (AALY…IFFI), 420–442 (AIIS…LYVH), and 520–538 (FLVH…LILV). Residues C562 and C571 each contribute to the [4Fe-4S] cluster site. Transmembrane regions (helical) follow at residues 578-599 (AFYL…YWHW) and 646-668 (LAVW…MFLI). The chlorophyll a site is built by H657, M665, and Y673. Residue W674 coordinates phylloquinone. The chain crosses the membrane as a helical span at residues 710 to 730 (VVGLAHFSVGYVLTYAAFLIA).

This sequence belongs to the PsaA/PsaB family. The PsaA/B heterodimer binds the P700 chlorophyll special pair and subsequent electron acceptors. PSI consists of a core antenna complex that captures photons, and an electron transfer chain that converts photonic excitation into a charge separation. The cyanobacterial PSI reaction center is composed of one copy each of PsaA,B,C,D,E,F,I,J,K,L,M and X, and forms trimeric complexes. PSI electron transfer chain: 5 chlorophyll a, 1 chlorophyll a', 2 phylloquinones and 3 4Fe-4S clusters. PSI core antenna: 90 chlorophyll a, 22 carotenoids, 3 phospholipids and 1 galactolipid. P700 is a chlorophyll a/chlorophyll a' dimer, A0 is one or more chlorophyll a, A1 is one or both phylloquinones and FX is a shared 4Fe-4S iron-sulfur center. serves as cofactor.

The protein localises to the cellular thylakoid membrane. The catalysed reaction is reduced [plastocyanin] + hnu + oxidized [2Fe-2S]-[ferredoxin] = oxidized [plastocyanin] + reduced [2Fe-2S]-[ferredoxin]. Functionally, psaA and PsaB bind P700, the primary electron donor of photosystem I (PSI), as well as the electron acceptors A0, A1 and FX. PSI is a plastocyanin/cytochrome c6-ferredoxin oxidoreductase, converting photonic excitation into a charge separation, which transfers an electron from the donor P700 chlorophyll pair to the spectroscopically characterized acceptors A0, A1, FX, FA and FB in turn. Oxidized P700 is reduced on the lumenal side of the thylakoid membrane by plastocyanin or cytochrome c6. The polypeptide is Photosystem I P700 chlorophyll a apoprotein A2 (Parasynechococcus marenigrum (strain WH8102)).